The following is a 286-amino-acid chain: Pyridoxal kinase PdxY (286 aa).

Residues Ser-9 and 44–45 (MQ) contribute to the substrate site. ATP is bound by residues Asp-111, Glu-147, and Lys-180. Asp-221 lines the substrate pocket.

This sequence belongs to the pyridoxine kinase family. PdxY subfamily. As to quaternary structure, homodimer. Mg(2+) serves as cofactor.

It catalyses the reaction pyridoxal + ATP = pyridoxal 5'-phosphate + ADP + H(+). It participates in cofactor metabolism; pyridoxal 5'-phosphate salvage; pyridoxal 5'-phosphate from pyridoxal: step 1/1. In terms of biological role, pyridoxal kinase involved in the salvage pathway of pyridoxal 5'-phosphate (PLP). Catalyzes the phosphorylation of pyridoxal to PLP. This is Pyridoxal kinase PdxY from Burkholderia lata (strain ATCC 17760 / DSM 23089 / LMG 22485 / NCIMB 9086 / R18194 / 383).